The primary structure comprises 262 residues: Aminoglycoside (3'') (9) adenylyltransferase (262 aa).

The catalysed reaction is streptomycin + ATP = 3''-O-adenylylstreptomycin + diphosphate. The enzyme catalyses spectinomycin + ATP = 9-O-adenylylspectinomycin + diphosphate. Functionally, mediates bacterial resistance to the antibiotics streptomycin and spectinomycin. The sequence is that of Aminoglycoside (3'') (9) adenylyltransferase from Klebsiella pneumoniae.